The following is a 180-amino-acid chain: UPF0303 protein PSEEN3311 (180 aa).

This sequence belongs to the UPF0303 family.

In Pseudomonas entomophila (strain L48), this protein is UPF0303 protein PSEEN3311.